We begin with the raw amino-acid sequence, 4743 residues long: Apolipoprotein B-100 (4743 aa).

The signal sequence occupies residues 1–27 (MGPQRPALRAPLLLLFLLLFLDTSVWA). The interval 29-113 (DATRFKHLRK…KNSEEFASAM (85 aa)) is heparin-binding. Residues 33-660 (FKHLRKYVYS…PSSYLPKESM (628 aa)) enclose the Vitellogenin domain. A disulfide bridge connects residues Cys-65 and Cys-84. Residue Asn-172 is glycosylated (N-linked (GlcNAc...) asparagine). Cystine bridges form between Cys-173–Cys-199, Cys-232–Cys-248, Cys-372–Cys-377, and Cys-466–Cys-501. The segment at 219–293 (VRPLSTLISS…RFFRGGINQV (75 aa)) is heparin-binding. A heparin-binding region spans residues 890–947 (NTNFFHESGLEARVALKAGQLKVIIPSPKRPVKLFSGSNTLHLVSTTKTEVIPPLIEN). An intrachain disulfide couples Cys-954 to Cys-964. Asn-971, Asn-1336, Asn-1345, and Asn-1491 each carry an N-linked (GlcNAc...) asparagine glycan. At Lys-1973 the chain carries N6-acetyllysine. Ser-2006 bears the Phosphoserine mark. The heparin-binding stretch occupies residues 2010–2145 (NDAFDEPREF…EKLSQLETYA (136 aa)). Asn-2094, Asn-2522, Asn-2662, Asn-2741, Asn-2791, Asn-2897, Asn-2944, and Asn-3063 each carry an N-linked (GlcNAc...) asparagine glycan. The segment at 3123 to 3198 (FLKTTKQSFD…KIKFDKYKTE (76 aa)) is heparin-binding. The tract at residues 3136–3146 (KAQYKKNRDKH) is basic (possible receptor binding region). N-linked (GlcNAc...) asparagine glycosylation is found at Asn-3186, Asn-3299, and Asn-3321. Residues 3336–3356 (VTDALQYKLEGTSRLMRKKVL) are LDL receptor binding. Residues 3346-3479 (GTSRLMRKKV…QEYSGSVANE (134 aa)) form a heparin-binding region. The interval 3349-3357 (RLMRKKVLK) is basic (possible receptor binding region). N-linked (GlcNAc...) asparagine glycans are attached at residues Asn-3428, Asn-3715, and Asn-3828. Ser-3981 bears the Phosphoserine mark. A Phosphothreonine modification is found at Thr-3985. N-linked (GlcNAc...) asparagine glycosylation is found at Asn-4203 and Asn-4232.

In terms of assembly, interacts with PCSK9. Interacts with MTTP. Interacts with AUP1. Interacts with CIDEB. Post-translationally, palmitoylated; structural requirement for proper assembly of the hydrophobic core of the lipoprotein particle. Detected in intestine and liver (at protein level).

It is found in the cytoplasm. The protein localises to the secreted. The protein resides in the lipid droplet. In terms of biological role, apolipoprotein B is a major protein constituent of chylomicrons (apo B-48), LDL (apo B-100) and VLDL (apo B-100). Apo B-100 functions as a recognition signal for the cellular binding and internalization of LDL particles by the apoB/E receptor. The chain is Apolipoprotein B-100 (Apob) from Rattus norvegicus (Rat).